Reading from the N-terminus, the 147-residue chain is MSDFYVRYYSGHHGRFGHEFLEFDYHSDGLARYANNSNYRNDSLIRKEMFVSELVLKEVQRIVDDSEIIKESDESWPPENKDGKQELEIRMNGKHIMFETCKLGSLADVQNSDDPEGLKVFYYLIQDLKALCFSLISLNFKLRPVKN.

Belongs to the mago nashi family.

The protein resides in the cytoplasm. It localises to the nucleus. This chain is Protein mago nashi homolog (mnh1), found in Schizosaccharomyces pombe (strain 972 / ATCC 24843) (Fission yeast).